Here is a 553-residue protein sequence, read N- to C-terminus: Putative transport protein YidE (553 aa).

5 helical membrane passes run 4–24 (IALTVSVLALVAVVGLWIGNI), 28–48 (GVGFGIGGVLFGGIIVGHFVD), 65–85 (FGLILFVYTIGIQVGPGFFAS), 95–115 (LFAVLIVIMGGLVTAILHKIF), and 158–178 (MSYAMAYPFGICGILLTMWLM). 2 RCK C-terminal domains span residues 192–276 (KHES…VIGK) and 279–361 (DTSL…VVGN). Helical transmembrane passes span 371–391 (MLPVFIGIGLGVLLGSIPLFV), 393–413 (GFPVALKLGLAGGPLIMALIL), 437–457 (LGIVLFLAVVGLKSGGDFVDT), 464–484 (LSWIGYGIFITAIPLITIGLL), 493–513 (YLTLCGMLAGSMTDPPALAFA), and 533–553 (LVMFLRIITPQLLAVIFWGMG).

The protein belongs to the AAE transporter (TC 2.A.81) family. YidE subfamily.

It is found in the cell membrane. This Salmonella paratyphi C (strain RKS4594) protein is Putative transport protein YidE.